The following is a 205-amino-acid chain: Large ribosomal subunit protein uL4 (205 aa).

Belongs to the universal ribosomal protein uL4 family. Part of the 50S ribosomal subunit. Contacts proteins L15 and L34.

One of the primary rRNA binding proteins, this protein initially binds near the 5'-end of the 23S rRNA. It is important during the early stages of 50S assembly. Functionally, makes multiple contacts with different domains of the 23S rRNA in the assembled 50S subunit. In terms of biological role, this protein is located close to the polypeptide exit tunnel, and interacts with the modified macrolide azithromycin, which blocks the tunnel. The polypeptide is Large ribosomal subunit protein uL4 (rplD) (Deinococcus radiodurans (strain ATCC 13939 / DSM 20539 / JCM 16871 / CCUG 27074 / LMG 4051 / NBRC 15346 / NCIMB 9279 / VKM B-1422 / R1)).